Here is a 306-residue protein sequence, read N- to C-terminus: L-lactate dehydrogenase (306 aa).

Residues Val11, Asp32, Lys37, and 76-77 each bind NAD(+); that span reads GA. Residues Gln79 and Arg85 each coordinate substrate. NAD(+) is bound by residues Ser98, 115 to 117, and Ser140; that span reads VSN. 117–120 lines the substrate pocket; that stretch reads NPVD. 145-148 is a substrate binding site; that stretch reads DTAR. Positions 150 and 165 each coordinate beta-D-fructose 1,6-bisphosphate. Residue His172 is the Proton acceptor of the active site. Tyr214 is subject to Phosphotyrosine. Thr223 serves as a coordination point for substrate.

Belongs to the LDH/MDH superfamily. LDH family. As to quaternary structure, homotetramer.

It localises to the cytoplasm. It catalyses the reaction (S)-lactate + NAD(+) = pyruvate + NADH + H(+). Its pathway is fermentation; pyruvate fermentation to lactate; (S)-lactate from pyruvate: step 1/1. With respect to regulation, allosterically activated by fructose 1,6-bisphosphate (FBP). Its function is as follows. Catalyzes the conversion of lactate to pyruvate. The chain is L-lactate dehydrogenase from Synechococcus sp. (strain JA-3-3Ab) (Cyanobacteria bacterium Yellowstone A-Prime).